The chain runs to 345 residues: MHHNVFTNTPTIPIDVKDRSVSELMDGMLRTGFQGRKLAESVQAWSNMLKEKDTTVLMGLSGAMVPAGMRRVISYLIRERMIDCLVSTGANLFHDSHEALGRKHYVGSHLANDEKLFEHGVDRIYDVFAVEEEFRNADNLIADFAEEIGEISCSSREFMYLLGKELVRRGAAEDSIVVSAYRHNVPIFVPALSDSSIGIGLTIARRRGLKLEIDQIKDVDEITQIVEKSGHTGVVYVGGGVPKNFIQQTEVIASILGMDVPGHEYAIQYTSDSPHWGGLSGCTFDEAVSWGKVAAQAKKVQVFVDATIALPIVAHALHEKTRGVKRTAPVFSWDGPEGLEIAYNE.

K292 functions as the Nucleophile in the catalytic mechanism.

The protein belongs to the deoxyhypusine synthase family. NAD(+) is required as a cofactor.

The catalysed reaction is [eIF5A protein]-L-lysine + spermidine = [eIF5A protein]-deoxyhypusine + propane-1,3-diamine. It functions in the pathway protein modification; eIF5A hypusination. Its function is as follows. Catalyzes the NAD-dependent oxidative cleavage of spermidine and the subsequent transfer of the butylamine moiety of spermidine to the epsilon-amino group of a specific lysine residue of the eIF-5A precursor protein to form the intermediate deoxyhypusine residue. This is Probable deoxyhypusine synthase 2 (dys2) from Methanosarcina mazei (strain ATCC BAA-159 / DSM 3647 / Goe1 / Go1 / JCM 11833 / OCM 88) (Methanosarcina frisia).